The sequence spans 432 residues: Acetylserotonin O-methyltransferase (432 aa).

Residues tyrosine 146, tryptophan 163, aspartate 209, 235-237 (GDF), and arginine 252 contribute to the S-adenosyl-L-methionine site. Histidine 255 functions as the Proton donor/acceptor in the catalytic mechanism. Substrate is bound by residues aspartate 256, asparagine 302, and glutamine 306. Residues 373-432 (VPGARSDAAGTGSGTGNTGSGIMLQGETLESEVSAPQAGSDVGGAGNEPRSGTLKQGDWK) form a disordered region.

This sequence belongs to the class I-like SAM-binding methyltransferase superfamily. Cation-independent O-methyltransferase family. In terms of assembly, homodimer. Expressed predominantly in the pineal gland (at protein level). Very low expression, if any, in the retina.

The enzyme catalyses N-acetylserotonin + S-adenosyl-L-methionine = melatonin + S-adenosyl-L-homocysteine + H(+). The protein operates within aromatic compound metabolism; melatonin biosynthesis; melatonin from serotonin: step 1/2. Its function is as follows. Catalyzes the transfer of a methyl group onto N-acetylserotonin, producing melatonin (N-acetyl-5-methoxytryptamine). The chain is Acetylserotonin O-methyltransferase (Asmt) from Rattus norvegicus (Rat).